We begin with the raw amino-acid sequence, 843 residues long: uncharacterized protein (843 aa).

The zn(2)-C6 fungal-type DNA-binding region spans 15-42; sequence CLRCKQRKIKCDKLWPTCSKCKASSSIC.

The protein localises to the nucleus. In terms of biological role, required for growth on non-fermentable carbon sources. This is an uncharacterized protein from Saccharomyces cerevisiae (strain ATCC 204508 / S288c) (Baker's yeast).